The primary structure comprises 37 residues: Large ribosomal subunit protein bL36 (37 aa).

Belongs to the bacterial ribosomal protein bL36 family.

This is Large ribosomal subunit protein bL36 from Mycobacterium ulcerans (strain Agy99).